We begin with the raw amino-acid sequence, 166 residues long: Urease accessory protein UreE (166 aa).

Positions phenylalanine 132–proline 156 are disordered.

Belongs to the UreE family.

It localises to the cytoplasm. Functionally, involved in urease metallocenter assembly. Binds nickel. Probably functions as a nickel donor during metallocenter assembly. The sequence is that of Urease accessory protein UreE from Pseudomonas fluorescens (strain ATCC BAA-477 / NRRL B-23932 / Pf-5).